The following is an 89-amino-acid chain: Elongation factor 1-beta (89 aa).

This sequence belongs to the EF-1-beta/EF-1-delta family.

In terms of biological role, promotes the exchange of GDP for GTP in EF-1-alpha/GDP, thus allowing the regeneration of EF-1-alpha/GTP that could then be used to form the ternary complex EF-1-alpha/GTP/AAtRNA. This chain is Elongation factor 1-beta, found in Methanobrevibacter smithii (strain ATCC 35061 / DSM 861 / OCM 144 / PS).